The chain runs to 315 residues: Cytoplasmic dynein intermediate light chain DYN3 (315 aa).

Belongs to the dynein light intermediate chain DYN3 family. As to quaternary structure, the cytoplasmic dynein is composed of at least two heavy chains and a number of intermediate and light chains.

It is found in the cytoplasm. The protein resides in the cytoskeleton. Component of the cytoplasmic dynein which acts as a motor for the intracellular retrograde motility of vesicles and organelles along microtubules. May play an important role in the proper orientation of the mitotic spindle into the budding daughter cell yeast. Probably required for normal progression of the cell cycle. The polypeptide is Cytoplasmic dynein intermediate light chain DYN3 (DYN3) (Candida glabrata (strain ATCC 2001 / BCRC 20586 / JCM 3761 / NBRC 0622 / NRRL Y-65 / CBS 138) (Yeast)).